We begin with the raw amino-acid sequence, 468 residues long: 6-phospho-beta-galactosidase (468 aa).

5 residues coordinate D-galactose 6-phosphate: Gln-19, His-116, Asn-159, Glu-160, and Asn-297. The active-site Proton donor is the Glu-160. Residue Glu-375 is the Nucleophile of the active site. The D-galactose 6-phosphate site is built by Ser-428, Trp-429, Lys-435, and Tyr-437.

Belongs to the glycosyl hydrolase 1 family.

It catalyses the reaction a 6-phospho-beta-D-galactoside + H2O = D-galactose 6-phosphate + an alcohol. The protein operates within carbohydrate metabolism; lactose degradation; D-galactose 6-phosphate and beta-D-glucose from lactose 6-phosphate: step 1/1. The polypeptide is 6-phospho-beta-galactosidase (Streptococcus agalactiae serotype III (strain NEM316)).